A 192-amino-acid chain; its full sequence is Pupal cuticle protein (192 aa).

An N-terminal signal peptide occupies residues 1 to 15 (MHLLMSLFGVLAVMQ). The region spanning 45–106 (DGNYRYAYET…PVGDHIPKVP (62 aa)) is the Chitin-binding type R&amp;R domain. Over residues 149–163 (QDQTTPRSRPSSTPK) the composition is skewed to polar residues. The tract at residues 149-192 (QDQTTPRSRPSSTPKTIYLTHPPTLSDAPTRRPLRQRQNDSRRR) is disordered.

In terms of biological role, component of the cuticle of the pupa of fruit fly. The chain is Pupal cuticle protein (Pcp) from Drosophila pseudoobscura pseudoobscura (Fruit fly).